A 306-amino-acid chain; its full sequence is Homeobox protein HMX3 (306 aa).

Positions 95 to 181 (HTPRTEVPDK…DKKPCRKKKT (87 aa)) are disordered. Composition is skewed to basic and acidic residues over residues 117-143 (GERD…KSPE) and 153-174 (EEGK…PDKK). The segment at residues 178–237 (KKKTRTVFSRSQVFQLESTFDMKRYLSSSERAGLAASLHLTETQVKIWFQNRRNKWKRQL) is a DNA-binding region (homeobox).

It belongs to the HMX homeobox family.

It localises to the nucleus. Transcription factor involved in specification of neuronal cell types and which is required for inner ear and hypothalamus development. Binds to the 5'-CAAGTG-3' core sequence. May act as a stage-specific inhibitor of anf1 in the anterior neural plate during the development. The protein is Homeobox protein HMX3 (hmx3) of Xenopus tropicalis (Western clawed frog).